The primary structure comprises 459 residues: Ribulose bisphosphate carboxylase (459 aa).

A substrate-binding site is contributed by asparagine 111. Lysine 166 serves as the catalytic Proton acceptor. Lysine 168 lines the substrate pocket. Mg(2+) contacts are provided by lysine 191, aspartate 193, and glutamate 194. Lysine 191 carries the N6-carboxylysine modification. Histidine 287 (proton acceptor) is an active-site residue. Substrate contacts are provided by arginine 288, histidine 321, and serine 368.

It belongs to the RuBisCO large chain family. Type II subfamily. As to quaternary structure, homodimer. The cofactor is Mg(2+).

It catalyses the reaction 2 (2R)-3-phosphoglycerate + 2 H(+) = D-ribulose 1,5-bisphosphate + CO2 + H2O. It carries out the reaction D-ribulose 1,5-bisphosphate + O2 = 2-phosphoglycolate + (2R)-3-phosphoglycerate + 2 H(+). Functionally, ruBisCO catalyzes two reactions: the carboxylation of D-ribulose 1,5-bisphosphate, the primary event in carbon dioxide fixation, as well as the oxidative fragmentation of the pentose substrate. Both reactions occur simultaneously and in competition at the same active site. The protein is Ribulose bisphosphate carboxylase of Cereibacter sphaeroides (strain ATCC 17029 / ATH 2.4.9) (Rhodobacter sphaeroides).